The primary structure comprises 324 residues: UDP-N-acetylenolpyruvoylglucosamine reductase (324 aa).

Residues 36–203 enclose the FAD-binding PCMH-type domain; the sequence is FRAGGLAELM…THAIFEGFPE (168 aa). Arg183 is a catalytic residue. The Proton donor role is filled by Ser232. Glu302 is an active-site residue.

It belongs to the MurB family. The cofactor is FAD.

It is found in the cytoplasm. It catalyses the reaction UDP-N-acetyl-alpha-D-muramate + NADP(+) = UDP-N-acetyl-3-O-(1-carboxyvinyl)-alpha-D-glucosamine + NADPH + H(+). Its pathway is cell wall biogenesis; peptidoglycan biosynthesis. Cell wall formation. The polypeptide is UDP-N-acetylenolpyruvoylglucosamine reductase (Sinorhizobium fredii (strain NBRC 101917 / NGR234)).